The chain runs to 150 residues: 1,4-dihydroxy-2-naphthoyl-CoA hydrolase (150 aa).

Aspartate 19 is a catalytic residue.

Belongs to the 4-hydroxybenzoyl-CoA thioesterase family. DHNA-CoA hydrolase subfamily.

The catalysed reaction is 1,4-dihydroxy-2-naphthoyl-CoA + H2O = 1,4-dihydroxy-2-naphthoate + CoA + H(+). It functions in the pathway cofactor biosynthesis; phylloquinone biosynthesis. The protein operates within quinol/quinone metabolism; 1,4-dihydroxy-2-naphthoate biosynthesis; 1,4-dihydroxy-2-naphthoate from chorismate: step 7/7. Its function is as follows. Catalyzes the hydrolysis of 1,4-dihydroxy-2-naphthoyl-CoA (DHNA-CoA) to 1,4-dihydroxy-2-naphthoate (DHNA), a reaction involved in phylloquinone (vitamin K1) biosynthesis. The sequence is that of 1,4-dihydroxy-2-naphthoyl-CoA hydrolase from Prochlorococcus marinus subsp. pastoris (strain CCMP1986 / NIES-2087 / MED4).